The primary structure comprises 185 residues: ATP synthase subunit delta (185 aa).

Belongs to the ATPase delta chain family. F-type ATPases have 2 components, F(1) - the catalytic core - and F(0) - the membrane proton channel. F(1) has five subunits: alpha(3), beta(3), gamma(1), delta(1), epsilon(1). CF(0) has four main subunits: a(1), b(1), b'(1) and c(10-14). The alpha and beta chains form an alternating ring which encloses part of the gamma chain. F(1) is attached to F(0) by a central stalk formed by the gamma and epsilon chains, while a peripheral stalk is formed by the delta, b and b' chains.

The protein localises to the cellular thylakoid membrane. F(1)F(0) ATP synthase produces ATP from ADP in the presence of a proton or sodium gradient. F-type ATPases consist of two structural domains, F(1) containing the extramembraneous catalytic core and F(0) containing the membrane proton channel, linked together by a central stalk and a peripheral stalk. During catalysis, ATP synthesis in the catalytic domain of F(1) is coupled via a rotary mechanism of the central stalk subunits to proton translocation. Its function is as follows. This protein is part of the stalk that links CF(0) to CF(1). It either transmits conformational changes from CF(0) to CF(1) or is implicated in proton conduction. This Picosynechococcus sp. (strain ATCC 27264 / PCC 7002 / PR-6) (Agmenellum quadruplicatum) protein is ATP synthase subunit delta.